The following is a 481-amino-acid chain: UDP-glycosyltransferase 88F4 (481 aa).

Residues Ser288, 357 to 358, 375 to 383, and 397 to 400 contribute to the UDP-alpha-D-glucose site; these read WA, HCGWNSVLE, and YAEQ.

The protein belongs to the UDP-glycosyltransferase family.

Functionally, glycosyltransferase that may possess chalcone and dihydrochalcone 2'-O-glucosyltransferase activity. This chain is UDP-glycosyltransferase 88F4, found in Malus domestica (Apple).